The sequence spans 303 residues: Protease HtpX homolog (303 aa).

The next 2 helical transmembrane spans lie at 19 to 39 (IIIFVISILLFLVCYAIVSYF) and 41 to 61 (LGEFGILVAFLMVFFVNYYAY). His-146 serves as a coordination point for Zn(2+). Glu-147 is a catalytic residue. Zn(2+) is bound at residue His-150. The next 2 helical transmembrane spans lie at 156-176 (VRLQTVAAVMVGLIVILGDSL) and 192-212 (NILGIVSLVIAILAPFLATLL). Glu-221 is a binding site for Zn(2+).

This sequence belongs to the peptidase M48B family. Zn(2+) serves as cofactor.

Its subcellular location is the cell inner membrane. This Dictyoglomus thermophilum (strain ATCC 35947 / DSM 3960 / H-6-12) protein is Protease HtpX homolog.